Here is a 213-residue protein sequence, read N- to C-terminus: Ribonuclease T (213 aa).

The Exonuclease domain occupies 28 to 202 (VVVDVETGGF…YDTEQTARLF (175 aa)). Mg(2+)-binding residues include aspartate 31, glutamate 33, histidine 189, and aspartate 194. The active-site Proton donor/acceptor is histidine 189.

This sequence belongs to the RNase T family. As to quaternary structure, homodimer. Mg(2+) serves as cofactor.

Functionally, trims short 3' overhangs of a variety of RNA species, leaving a one or two nucleotide 3' overhang. Responsible for the end-turnover of tRNA: specifically removes the terminal AMP residue from uncharged tRNA (tRNA-C-C-A). Also appears to be involved in tRNA biosynthesis. The protein is Ribonuclease T of Xanthomonas euvesicatoria pv. vesicatoria (strain 85-10) (Xanthomonas campestris pv. vesicatoria).